The following is a 481-amino-acid chain: Alpha-L-arabinofuranosidase 43 (481 aa).

Positions 1–19 (MRFSVFTAAIAAAFSACCA) are cleaved as a signal peptide. N-linked (GlcNAc...) asparagine glycosylation is found at asparagine 158, asparagine 176, and asparagine 365.

It belongs to the glycosyl hydrolase 43 family.

The protein resides in the secreted. It catalyses the reaction Hydrolysis of terminal non-reducing alpha-L-arabinofuranoside residues in alpha-L-arabinosides.. Its activity is regulated as follows. Activity is significantly inhibited by SDS and partially inhibited by Ag(+), Fe(3+) and beta-mercaptoethanol. Its function is as follows. Alpha-L-arabinofuranosidase specific for the cleavage of alpha-1,3-linkage. Shows high activity against 4-nitrophenyl alpha-L-arabinofuranoside, debranched arabinan, and sugar beet arabinan. The sequence is that of Alpha-L-arabinofuranosidase 43 from Humicola insolens (Soft-rot fungus).